Consider the following 450-residue polypeptide: MNPNQKIITIGSICMVVGIISLMLQIGNIISVWVSHIIQTWHPNQPEPCNQSINFYTEQAAASVTLAGNSSLCPISGWAIYSKDNSIRIGSKGDVFVIREPFISCSHLECRTFFLTQGALLNDKHSNGTVKDRSPYRTLMSCPVGEAPSPYNSRFESVAWSASACHDGISWLTIGISGPDNGAVAVLKYNGIITDTIKSWRNNILRTQESECACVNGSCFTVMTDGPSNEQASYKIFKIEKGRVVKSVELNAPNYHYEECSCYPDAGEITCVCRDNWHGSNRPWVSFNQNLEYQIGYICSGVFGDSPRPNDGTGSCGPVSLNGAYGVKGFSFKYGNGVWIGRTKSTSSRSGFEMIWDPNGWTETDSSFSLKQDIIAITDWSGYSGSFIQHPELTGLNCMRPCFWVELIRGRPKEKTIWTSGSSISFCGVNSDTVGWSWPDGADLPFTIDK.

Residues 1–6 (MNPNQK) lie on the Intravirion side of the membrane. A helical membrane pass occupies residues 7–27 (IITIGSICMVVGIISLMLQIG). The interval 11-33 (GSICMVVGIISLMLQIGNIISVW) is involved in apical transport and lipid raft association. Residues 28–450 (NIISVWVSHI…GADLPFTIDK (423 aa)) lie on the Virion surface side of the membrane. Residues 36-71 (HIIQTWHPNQPEPCNQSINFYTEQAAASVTLAGNSS) form a hypervariable stalk region region. Residues Asn-50 and Asn-69 are each glycosylated (N-linked (GlcNAc...) asparagine; by host). A head of neuraminidase region spans residues 72-450 (LCPISGWAIY…GADLPFTIDK (379 aa)). 8 disulfides stabilise this stretch: Cys-73–Cys-398, Cys-105–Cys-110, Cys-165–Cys-212, Cys-214–Cys-219, Cys-260–Cys-273, Cys-262–Cys-271, Cys-299–Cys-316, and Cys-402–Cys-427. A substrate-binding site is contributed by Arg-99. The N-linked (GlcNAc...) asparagine; by host glycan is linked to Asn-127. The Proton donor/acceptor role is filled by Asp-132. Arg-133 contacts substrate. Asn-216 carries an N-linked (GlcNAc...) asparagine; by host glycan. 258-259 (EE) contacts substrate. Arg-274 contributes to the substrate binding site. Ca(2+) is bound by residues Asp-275, Gly-279, and Asp-305. Arg-349 serves as a coordination point for substrate. The Nucleophile role is filled by Tyr-383.

This sequence belongs to the glycosyl hydrolase 34 family. Homotetramer. The cofactor is Ca(2+). Post-translationally, N-glycosylated.

The protein resides in the virion membrane. The protein localises to the host apical cell membrane. The enzyme catalyses Hydrolysis of alpha-(2-&gt;3)-, alpha-(2-&gt;6)-, alpha-(2-&gt;8)- glycosidic linkages of terminal sialic acid residues in oligosaccharides, glycoproteins, glycolipids, colominic acid and synthetic substrates.. Inhibited by the neuraminidase inhibitors zanamivir (Relenza) and oseltamivir (Tamiflu). These drugs interfere with the release of progeny virus from infected cells and are effective against all influenza strains. Resistance to neuraminidase inhibitors is quite rare. Functionally, catalyzes the removal of terminal sialic acid residues from viral and cellular glycoconjugates. Cleaves off the terminal sialic acids on the glycosylated HA during virus budding to facilitate virus release. Additionally helps virus spread through the circulation by further removing sialic acids from the cell surface. These cleavages prevent self-aggregation and ensure the efficient spread of the progeny virus from cell to cell. Otherwise, infection would be limited to one round of replication. Described as a receptor-destroying enzyme because it cleaves a terminal sialic acid from the cellular receptors. May facilitate viral invasion of the upper airways by cleaving the sialic acid moieties on the mucin of the airway epithelial cells. Likely to plays a role in the budding process through its association with lipid rafts during intracellular transport. May additionally display a raft-association independent effect on budding. Plays a role in the determination of host range restriction on replication and virulence. Sialidase activity in late endosome/lysosome traffic seems to enhance virus replication. This Influenza A virus (strain A/Hong Kong/156/1997 H5N1 genotype Gs/Gd) protein is Neuraminidase.